A 310-amino-acid polypeptide reads, in one-letter code: tRNA-cytidine(32) 2-sulfurtransferase (310 aa).

Positions 47 to 52 match the PP-loop motif motif; sequence SGGKDS. Residues C122, C125, and C213 each contribute to the [4Fe-4S] cluster site.

The protein belongs to the TtcA family. As to quaternary structure, homodimer. Mg(2+) is required as a cofactor. The cofactor is [4Fe-4S] cluster.

The protein localises to the cytoplasm. The catalysed reaction is cytidine(32) in tRNA + S-sulfanyl-L-cysteinyl-[cysteine desulfurase] + AH2 + ATP = 2-thiocytidine(32) in tRNA + L-cysteinyl-[cysteine desulfurase] + A + AMP + diphosphate + H(+). The protein operates within tRNA modification. Catalyzes the ATP-dependent 2-thiolation of cytidine in position 32 of tRNA, to form 2-thiocytidine (s(2)C32). The sulfur atoms are provided by the cysteine/cysteine desulfurase (IscS) system. This chain is tRNA-cytidine(32) 2-sulfurtransferase, found in Haemophilus influenzae (strain PittEE).